A 418-amino-acid polypeptide reads, in one-letter code: Gamma-glutamyl phosphate reductase (418 aa).

The protein belongs to the gamma-glutamyl phosphate reductase family.

The protein localises to the cytoplasm. The enzyme catalyses L-glutamate 5-semialdehyde + phosphate + NADP(+) = L-glutamyl 5-phosphate + NADPH + H(+). It functions in the pathway amino-acid biosynthesis; L-proline biosynthesis; L-glutamate 5-semialdehyde from L-glutamate: step 2/2. Its function is as follows. Catalyzes the NADPH-dependent reduction of L-glutamate 5-phosphate into L-glutamate 5-semialdehyde and phosphate. The product spontaneously undergoes cyclization to form 1-pyrroline-5-carboxylate. The polypeptide is Gamma-glutamyl phosphate reductase (Aliivibrio fischeri (strain MJ11) (Vibrio fischeri)).